Here is a 396-residue protein sequence, read N- to C-terminus: S-adenosylmethionine synthase (396 aa).

H16 provides a ligand contact to ATP. Residue D18 participates in Mg(2+) binding. E44 lines the K(+) pocket. Residues E57 and Q100 each coordinate L-methionine. The interval 100-110 (QSQDIARGVDN) is flexible loop. Residues 162-164 (DGK), 228-229 (RF), D237, 243-244 (RK), A260, and K264 each bind ATP. D237 provides a ligand contact to L-methionine. Position 268 (K268) interacts with L-methionine.

Belongs to the AdoMet synthase family. As to quaternary structure, homotetramer; dimer of dimers. The cofactor is Mg(2+). It depends on K(+) as a cofactor.

The protein localises to the cytoplasm. It catalyses the reaction L-methionine + ATP + H2O = S-adenosyl-L-methionine + phosphate + diphosphate. It participates in amino-acid biosynthesis; S-adenosyl-L-methionine biosynthesis; S-adenosyl-L-methionine from L-methionine: step 1/1. Its function is as follows. Catalyzes the formation of S-adenosylmethionine (AdoMet) from methionine and ATP. The overall synthetic reaction is composed of two sequential steps, AdoMet formation and the subsequent tripolyphosphate hydrolysis which occurs prior to release of AdoMet from the enzyme. This Myxococcus xanthus (strain DK1622) protein is S-adenosylmethionine synthase.